The following is a 153-amino-acid chain: Transcriptional repressor NrdR (153 aa).

The segment at 3-34 (CPSCSHNGTRVLDSRPVDEGRSIRRRRECESC) is a zinc-finger region. The ATP-cone domain maps to 49–139 (LIVVKKEGTR…VYRQFKDLNV (91 aa)).

This sequence belongs to the NrdR family. Zn(2+) serves as cofactor.

Negatively regulates transcription of bacterial ribonucleotide reductase nrd genes and operons by binding to NrdR-boxes. This is Transcriptional repressor NrdR from Bacillus anthracis (strain A0248).